Consider the following 334-residue polypeptide: Ketol-acid reductoisomerase (NADP(+)) (334 aa).

Residues 3–183 (ATIYYENDAD…GGTRGGVIET (181 aa)) enclose the KARI N-terminal Rossmann domain. NADP(+) contacts are provided by residues 26–29 (YGSQ), Arg-49, Ser-52, and 84–87 (DEVQ). His-109 is an active-site residue. Gly-135 is an NADP(+) binding site. In terms of domain architecture, KARI C-terminal knotted spans 184–329 (TFAEETETDL…LGLRRMMNWI (146 aa)). Mg(2+)-binding residues include Asp-192, Glu-196, Glu-228, and Glu-232. Residue Ser-253 coordinates substrate.

The protein belongs to the ketol-acid reductoisomerase family. Requires Mg(2+) as cofactor.

The enzyme catalyses (2R)-2,3-dihydroxy-3-methylbutanoate + NADP(+) = (2S)-2-acetolactate + NADPH + H(+). The catalysed reaction is (2R,3R)-2,3-dihydroxy-3-methylpentanoate + NADP(+) = (S)-2-ethyl-2-hydroxy-3-oxobutanoate + NADPH + H(+). It participates in amino-acid biosynthesis; L-isoleucine biosynthesis; L-isoleucine from 2-oxobutanoate: step 2/4. It functions in the pathway amino-acid biosynthesis; L-valine biosynthesis; L-valine from pyruvate: step 2/4. Functionally, involved in the biosynthesis of branched-chain amino acids (BCAA). Catalyzes an alkyl-migration followed by a ketol-acid reduction of (S)-2-acetolactate (S2AL) to yield (R)-2,3-dihydroxy-isovalerate. In the isomerase reaction, S2AL is rearranged via a Mg-dependent methyl migration to produce 3-hydroxy-3-methyl-2-ketobutyrate (HMKB). In the reductase reaction, this 2-ketoacid undergoes a metal-dependent reduction by NADPH to yield (R)-2,3-dihydroxy-isovalerate. This is Ketol-acid reductoisomerase (NADP(+)) from Rhodopirellula baltica (strain DSM 10527 / NCIMB 13988 / SH1).